Reading from the N-terminus, the 704-residue chain is Elongation factor G 1 (704 aa).

Positions 8–290 (ERYRNIGICA…CVVEYMPAPT (283 aa)) constitute a tr-type G domain. GTP is bound by residues 17 to 24 (AHVDAGKT), 88 to 92 (DTPGH), and 142 to 145 (NKMD).

It belongs to the TRAFAC class translation factor GTPase superfamily. Classic translation factor GTPase family. EF-G/EF-2 subfamily.

The protein localises to the cytoplasm. Its function is as follows. Catalyzes the GTP-dependent ribosomal translocation step during translation elongation. During this step, the ribosome changes from the pre-translocational (PRE) to the post-translocational (POST) state as the newly formed A-site-bound peptidyl-tRNA and P-site-bound deacylated tRNA move to the P and E sites, respectively. Catalyzes the coordinated movement of the two tRNA molecules, the mRNA and conformational changes in the ribosome. The sequence is that of Elongation factor G 1 from Pseudoalteromonas translucida (strain TAC 125).